The following is a 347-amino-acid chain: tRNA N6-adenosine threonylcarbamoyltransferase (347 aa).

Fe cation contacts are provided by histidine 111 and histidine 115. Residues 133 to 137 (LASGG), aspartate 166, glycine 179, and asparagine 278 each bind substrate. Aspartate 306 contacts Fe cation.

This sequence belongs to the KAE1 / TsaD family. It depends on Fe(2+) as a cofactor.

It is found in the cytoplasm. It catalyses the reaction L-threonylcarbamoyladenylate + adenosine(37) in tRNA = N(6)-L-threonylcarbamoyladenosine(37) in tRNA + AMP + H(+). Required for the formation of a threonylcarbamoyl group on adenosine at position 37 (t(6)A37) in tRNAs that read codons beginning with adenine. Is involved in the transfer of the threonylcarbamoyl moiety of threonylcarbamoyl-AMP (TC-AMP) to the N6 group of A37, together with TsaE and TsaB. TsaD likely plays a direct catalytic role in this reaction. The protein is tRNA N6-adenosine threonylcarbamoyltransferase of Paramagnetospirillum magneticum (strain ATCC 700264 / AMB-1) (Magnetospirillum magneticum).